Here is a 422-residue protein sequence, read N- to C-terminus: Zinc finger and BTB domain-containing protein 42 (422 aa).

The 69-residue stretch at 24 to 92 (CDCTVLVGDA…MYEGRLDLRS (69 aa)) folds into the BTB domain. 3 disordered regions span residues 121–141 (KDRSLDPGNPAPGAEPAQPPC), 166–188 (AALPPRASGPPPCQVPEESDQAL), and 207–256 (LQTP…AAKG). A compositionally biased stretch (pro residues) spans 243–252 (HSPPKPPPVP). 4 consecutive C2H2-type zinc fingers follow at residues 294–316 (CICPLCSKLFPSSHVLQLHLSAH), 334–356 (PTCPLCGKTFSCTYTLKRHERTH), 362–384 (YTCVQCGKSFQYSHNLSRHTVVH), and 390–413 (HACRWCERRFTQSGDLYRHVRKFH).

This sequence belongs to the krueppel C2H2-type zinc-finger protein family. ZBTB18 subfamily. Expressed in skeletal muscle (at protein level).

The protein localises to the cytoplasm. The protein resides in the nucleus. Its subcellular location is the nucleoplasm. Its function is as follows. Transcriptional repressor. Specifically binds DNA and probably acts by recruiting chromatin remodeling multiprotein complexes. This chain is Zinc finger and BTB domain-containing protein 42 (ZBTB42), found in Homo sapiens (Human).